Here is a 384-residue protein sequence, read N- to C-terminus: Cyclin-J (384 aa).

The 129-residue stretch at D15–C143 folds into the Cyclin N-terminal domain.

Belongs to the cyclin family. Cyclin J subfamily.

The polypeptide is Cyclin-J (ccnj) (Xenopus laevis (African clawed frog)).